We begin with the raw amino-acid sequence, 305 residues long: Coenzyme PQQ synthesis protein B (305 aa).

This sequence belongs to the PqqB family.

It participates in cofactor biosynthesis; pyrroloquinoline quinone biosynthesis. Functionally, may be involved in the transport of PQQ or its precursor to the periplasm. This is Coenzyme PQQ synthesis protein B from Cupriavidus taiwanensis (strain DSM 17343 / BCRC 17206 / CCUG 44338 / CIP 107171 / LMG 19424 / R1) (Ralstonia taiwanensis (strain LMG 19424)).